Consider the following 202-residue polypeptide: LexA repressor (202 aa).

Residues 28 to 48 (RAEIAQRLGFRSPNAAEEHLK) constitute a DNA-binding region (H-T-H motif). Active-site for autocatalytic cleavage activity residues include Ser119 and Lys156.

The protein belongs to the peptidase S24 family. In terms of assembly, homodimer.

The enzyme catalyses Hydrolysis of Ala-|-Gly bond in repressor LexA.. Its function is as follows. Represses a number of genes involved in the response to DNA damage (SOS response), including recA and lexA. Binds to the 16 bp palindromic sequence 5'-CTGTATATATATACAG-3'. In the presence of single-stranded DNA, RecA interacts with LexA causing an autocatalytic cleavage which disrupts the DNA-binding part of LexA, leading to derepression of the SOS regulon and eventually DNA repair. This chain is LexA repressor, found in Salmonella agona (strain SL483).